Here is a 288-residue protein sequence, read N- to C-terminus: ATP synthase gamma chain (288 aa).

This sequence belongs to the ATPase gamma chain family. F-type ATPases have 2 components, CF(1) - the catalytic core - and CF(0) - the membrane proton channel. CF(1) has five subunits: alpha(3), beta(3), gamma(1), delta(1), epsilon(1). CF(0) has three main subunits: a, b and c.

The protein resides in the cell inner membrane. Its function is as follows. Produces ATP from ADP in the presence of a proton gradient across the membrane. The gamma chain is believed to be important in regulating ATPase activity and the flow of protons through the CF(0) complex. This chain is ATP synthase gamma chain, found in Polaromonas naphthalenivorans (strain CJ2).